We begin with the raw amino-acid sequence, 1027 residues long: 2-oxoglutarate dehydrogenase, mitochondrial (1027 aa).

Thiamine diphosphate-binding residues include arginine 315, aspartate 413, asparagine 446, isoleucine 448, and glutamine 674. Residues aspartate 413, asparagine 446, and isoleucine 448 each coordinate Mg(2+).

The protein belongs to the alpha-ketoglutarate dehydrogenase family. In terms of assembly, homodimer. Component of the 2-oxoglutarate dehydrogenase complex. It depends on thiamine diphosphate as a cofactor. The cofactor is Mg(2+).

It is found in the mitochondrion matrix. The catalysed reaction is N(6)-[(R)-lipoyl]-L-lysyl-[protein] + 2-oxoglutarate + H(+) = N(6)-[(R)-S(8)-succinyldihydrolipoyl]-L-lysyl-[protein] + CO2. In terms of biological role, the 2-oxoglutarate dehydrogenase complex catalyzes the overall conversion of 2-oxoglutarate to succinyl-CoA and CO(2). It contains multiple copies of three enzymatic components: 2-oxoglutarate dehydrogenase (E1), dihydrolipoamide succinyltransferase (E2) and lipoamide dehydrogenase (E3). The protein is 2-oxoglutarate dehydrogenase, mitochondrial (ogdh-1) of Caenorhabditis briggsae.